A 212-amino-acid chain; its full sequence is Acyl-homoserine-lactone synthase (212 aa).

This sequence belongs to the autoinducer synthase family.

It carries out the reaction a fatty acyl-[ACP] + S-adenosyl-L-methionine = an N-acyl-L-homoserine lactone + S-methyl-5'-thioadenosine + holo-[ACP] + H(+). Its function is as follows. Required for the synthesis of OHHL (N-(3-oxohexanoyl)-L-homoserine lactone), an autoinducer molecule which binds to TraR and thus acts in the control of conjugal transfer. The polypeptide is Acyl-homoserine-lactone synthase (traI) (Rhizobium radiobacter (Agrobacterium tumefaciens)).